The following is a 518-amino-acid chain: 2,3-bisphosphoglycerate-independent phosphoglycerate mutase (518 aa).

Residues Asp14 and Ser64 each contribute to the Mn(2+) site. The active-site Phosphoserine intermediate is Ser64. Substrate contacts are provided by residues His125, 155–156 (RD), Arg187, Arg193, 264–267 (RPDR), and Lys337. The Mn(2+) site is built by Asp404, His408, Asp445, His446, and His467.

Belongs to the BPG-independent phosphoglycerate mutase family. Mn(2+) serves as cofactor.

It carries out the reaction (2R)-2-phosphoglycerate = (2R)-3-phosphoglycerate. Its pathway is carbohydrate degradation; glycolysis; pyruvate from D-glyceraldehyde 3-phosphate: step 3/5. Functionally, catalyzes the interconversion of 2-phosphoglycerate and 3-phosphoglycerate. The chain is 2,3-bisphosphoglycerate-independent phosphoglycerate mutase from Methanococcoides burtonii (strain DSM 6242 / NBRC 107633 / OCM 468 / ACE-M).